The chain runs to 403 residues: Putative transport protein TP_0553 (403 aa).

A run of 8 helical transmembrane segments spans residues 10–30 (ISLF…FVPY), 31–51 (LTVL…YRAL), 92–112 (AAVF…FIAI), 202–222 (LYFF…ALPL), 243–263 (KGLF…YGIF), 271–291 (LAML…CVWL), 293–313 (VGIS…LFVA), and 350–370 (TFGF…FTVI).

It belongs to the autoinducer-2 exporter (AI-2E) (TC 2.A.86) family.

It localises to the cell membrane. This chain is Putative transport protein TP_0553, found in Treponema pallidum (strain Nichols).